A 953-amino-acid polypeptide reads, in one-letter code: Coatomer subunit beta (953 aa).

The residue at position 2 (Thr2) is an N-acetylthreonine. HEAT repeat units lie at residues 96 to 131 (HEMILVCDAYRKDLQHPNEFIRGSTLRFLCKLKEAE), 132 to 168 (LLEPLMPAIRACLEHRHSYVRRNAVLAIYTIYRNFEH), 240 to 276 (SERARFIRCIYNLLQSSSPAVKYEAAGTLVTLSSAPT), 277 to 314 (AIKAAAQCYIDLIIKESDNNVKLIVLDRLVELKEHPAH), 316 to 353 (RVLQDLVMDILRVLSTPDLEVRKKTLQLALDLVSSRNV), and 396 to 433 (DMAANVIPVLMEFLSDSNEAAAADVLEFVREAIQRFDN). The residue at position 494 (Lys494) is an N6-acetyllysine.

Oligomeric complex that consists of at least the alpha, beta, beta', gamma, delta, epsilon and zeta subunits. Interacts with CAPN8. Interacts with SCYL1 and PRKCE. Interacts with COPG1. Interacts with ARF1 (myristoylated); this interaction is required for binding of COPB1 to Golgi membranes. Interacts (via trunk domain) with ARF1 (via switch I region); the interaction is direct. Interacts with KCNK2 (via N-terminus); this interaction increases the channel-mediated whole cell currents and promotes plasma membrane expression of KCNK2. Interacts with STX17. Interacts with TMEM115. Interacts with TMEM41B. In terms of processing, proteolytically cleaved between Ser-528 and Ser-529 by CAPN8. Predominantly expressed in the upper one-third of the oxyntic mucosa and in most regions of the pyloric mucosa. Ubiquitously expressed including platelet, liver, heart, spleen, lung and kidney.

It is found in the cytoplasm. Its subcellular location is the golgi apparatus membrane. It localises to the cytoplasmic vesicle. The protein localises to the COPI-coated vesicle membrane. The protein resides in the cell membrane. It is found in the endoplasmic reticulum-Golgi intermediate compartment. Its function is as follows. The coatomer is a cytosolic protein complex that binds to dilysine motifs and reversibly associates with Golgi non-clathrin-coated vesicles, which further mediate biosynthetic protein transport from the ER, via the Golgi up to the trans Golgi network. Coatomer complex is required for budding from Golgi membranes, and is essential for the retrograde Golgi-to-ER transport of dilysine-tagged proteins. In mammals, the coatomer can only be recruited by membranes associated to ADP-ribosylation factors (ARFs), which are small GTP-binding proteins; the complex also influences the Golgi structural integrity, as well as the processing, activity, and endocytic recycling of LDL receptors. Involved in the Golgi disassembly and reassembly processes during cell cycle. Involved in autophagy by playing a role in early endosome function. Plays a role in organellar compartmentalization of secretory compartments including endoplasmic reticulum (ER)-Golgi intermediate compartment (ERGIC), Golgi, trans-Golgi network (TGN) and recycling endosomes, and in biosynthetic transport of CAV1. Plays a functional role in facilitating the transport of kappa-type opioid receptor mRNAs into axons and enhances translation of these proteins in cortical neurons. Required for limiting lipid storage in lipid droplets. Involved in lipid homeostasis by regulating the presence of perilipin family members PLIN2 and PLIN3 at the lipid droplet surface and promoting the association of adipocyte triglyceride lipase (PNPLA2) with the lipid droplet surface to mediate lipolysis. The protein is Coatomer subunit beta (Copb1) of Mus musculus (Mouse).